We begin with the raw amino-acid sequence, 182 residues long: Bifunctional protein PyrR (182 aa).

The PRPP-binding motif lies at 99 to 111; the sequence is VILVDDVLYTGRT.

This sequence belongs to the purine/pyrimidine phosphoribosyltransferase family. PyrR subfamily. In terms of assembly, homodimer and homohexamer; in equilibrium.

It catalyses the reaction UMP + diphosphate = 5-phospho-alpha-D-ribose 1-diphosphate + uracil. Its function is as follows. Regulates transcriptional attenuation of the pyrimidine nucleotide (pyr) operon by binding in a uridine-dependent manner to specific sites on pyr mRNA. This disrupts an antiterminator hairpin in the RNA and favors formation of a downstream transcription terminator, leading to a reduced expression of downstream genes. Also displays a weak uracil phosphoribosyltransferase activity which is not physiologically significant. The sequence is that of Bifunctional protein PyrR from Alkaliphilus metalliredigens (strain QYMF).